Here is a 393-residue protein sequence, read N- to C-terminus: Mitogen-activated protein kinase homolog NTF4 (393 aa).

Residues 1 to 32 (MDGPAHQTDTVMSDAAGQQPAPPSQPVAGIDN) are disordered. The 286-residue stretch at 60–345 (KPPIMPIGKG…VEDALAHPYL (286 aa)) folds into the Protein kinase domain. Residues 66–74 (IGKGAYGIV) and Lys-89 each bind ATP. Residue Asp-186 is the Proton acceptor of the active site. Residue Thr-218 is modified to Phosphothreonine. Positions 218 to 220 (TEY) match the TXY motif. Tyr-220 is subject to Phosphotyrosine.

This sequence belongs to the protein kinase superfamily. CMGC Ser/Thr protein kinase family. MAP kinase subfamily. It depends on Mg(2+) as a cofactor. In terms of processing, dually phosphorylated on Thr-218 and Tyr-220, which activates the enzyme. Very low autophosphorylation, although dramatically increased when Mn(2+) is added to the reaction instead of Mg(2+).

The catalysed reaction is L-seryl-[protein] + ATP = O-phospho-L-seryl-[protein] + ADP + H(+). The enzyme catalyses L-threonyl-[protein] + ATP = O-phospho-L-threonyl-[protein] + ADP + H(+). With respect to regulation, activated by tyrosine and threonine phosphorylation. This chain is Mitogen-activated protein kinase homolog NTF4 (NTF4), found in Nicotiana tabacum (Common tobacco).